Here is a 217-residue protein sequence, read N- to C-terminus: Ribonuclease HII (217 aa).

Positions 27–216 constitute an RNase H type-2 domain; the sequence is SQVAGVDEAG…VKESIQEGVC (190 aa). Residues aspartate 33, glutamate 34, and aspartate 126 each coordinate a divalent metal cation.

It belongs to the RNase HII family. The cofactor is Mn(2+). It depends on Mg(2+) as a cofactor.

It is found in the cytoplasm. It catalyses the reaction Endonucleolytic cleavage to 5'-phosphomonoester.. Its function is as follows. Endonuclease that specifically degrades the RNA of RNA-DNA hybrids. This Chlamydia trachomatis serovar L2 (strain ATCC VR-902B / DSM 19102 / 434/Bu) protein is Ribonuclease HII.